Reading from the N-terminus, the 644-residue chain is Exoribonuclease 2 (644 aa).

The RNB domain maps to 189 to 516; it reads RQDLTALNFV…NHRLLKAVIK (328 aa). The S1 motif domain maps to 561–643; it reads NTRFAAEIID…ETRSIIARPA (83 aa).

Belongs to the RNR ribonuclease family. RNase II subfamily.

The protein resides in the cytoplasm. The catalysed reaction is Exonucleolytic cleavage in the 3'- to 5'-direction to yield nucleoside 5'-phosphates.. Involved in mRNA degradation. Hydrolyzes single-stranded polyribonucleotides processively in the 3' to 5' direction. The sequence is that of Exoribonuclease 2 from Salmonella paratyphi B (strain ATCC BAA-1250 / SPB7).